The following is a 282-amino-acid chain: Elongation factor Ts (282 aa).

The involved in Mg(2+) ion dislocation from EF-Tu stretch occupies residues 80 to 83 (TDFV).

The protein belongs to the EF-Ts family.

It is found in the cytoplasm. Associates with the EF-Tu.GDP complex and induces the exchange of GDP to GTP. It remains bound to the aminoacyl-tRNA.EF-Tu.GTP complex up to the GTP hydrolysis stage on the ribosome. This is Elongation factor Ts from Chlamydia trachomatis serovar A (strain ATCC VR-571B / DSM 19440 / HAR-13).